We begin with the raw amino-acid sequence, 117 residues long: Large ribosomal subunit protein bL20c (117 aa).

The protein belongs to the bacterial ribosomal protein bL20 family.

The protein localises to the plastid. Its subcellular location is the chloroplast. Its function is as follows. Binds directly to 23S ribosomal RNA and is necessary for the in vitro assembly process of the 50S ribosomal subunit. It is not involved in the protein synthesizing functions of that subunit. The chain is Large ribosomal subunit protein bL20c from Citrus sinensis (Sweet orange).